A 359-amino-acid polypeptide reads, in one-letter code: Probable 2-oxoacid dependent dioxygenase (359 aa).

A Fe2OG dioxygenase domain is found at 207–308 (KGLWMLCHCF…ISVACFFVHT (102 aa)). 3 residues coordinate Fe cation: histidine 231, aspartate 233, and histidine 287. The segment at 329–359 (PPKYRDTTSESSNHYVARKPNGNSSLDHLRI) is disordered. The span at 349 to 359 (NGNSSLDHLRI) shows a compositional bias: polar residues.

This sequence belongs to the iron/ascorbate-dependent oxidoreductase family. Requires Fe(2+) as cofactor. In terms of tissue distribution, expressed in leaves and seeds. All cultivars with seed-only-functional allele have low to non-detectable GSL-OH expression in the leaves.

It catalyses the reaction gluconapin + AH2 + O2 = progoitrin + A + H2O. Functionally, necessary for the hydroxylation of but-3-enyl glucosinolate to 2-hydroxybut-3-enyl glucosinolate, which is toxic to insects, bacteria and nematodes, inhibits seed germination and produces bitter flavors. The chain is Probable 2-oxoacid dependent dioxygenase from Arabidopsis thaliana (Mouse-ear cress).